A 34-amino-acid polypeptide reads, in one-letter code: uncharacterized protein (34 aa).

This is an uncharacterized protein from Acidianus two-tailed virus (ATV).